A 738-amino-acid chain; its full sequence is MKKRKILSLIAFLCISFIANAQQKLTSPDNNLVMTFQVDSKGAPTYELTYKNKVVIKPSTLGLELKKEDNTRTDFDWVDRRDLTKLDSKTNLYDGFEVKDTQTATFDETWQPVWGEEKEIRNHYNELAVTLYQPMNDRSIVIRFRLFNDGLGFRYEFPQQKSLNYFVIKEEHSQFGMNGDHIAFWIPGDYDTQEYDYTISRLSEIRGLMKEAITPNSSQTPFSQTGVQTALMMKTDDGLYINLHEAALVDYSCMHLNLDDKNMVFESWLTPDAKGDKGYMQTPCNTPWRTIIVSDDARNILASRITLNLNEPCKIADAASWVKPVKYIGVWWDMITGKGSWAYTDELTSVKLGETDYSKTKPNGKHSANTANVKRYIDFAAAHGFDAVLVEGWNEGWEDWFGNSKDYVFDFVTPYPDFDVKEIHRYAARKGIKMMMHHETSASVRNYERHMDKAYQFMADNGYNSVKSGYVGNIIPRGEHHYGQWMNNHYLYAVKKAADYKIMVNAHEATRPTGICRTYPNLIGNESARGTEYESFGGNKVYHTTILPFTRLVGGPMDYTPGIFETHCNKMNPANNSQVRSTIARQLALYVTMYSPLQMAADIPENYERFMDAFQFIKDVALDWDETNYLEAEPGEYITIARKAKDTDDWYVGCTAGENGHTSKLVFDFLTPGKQYIATVYADAKDADWKENPQAYTIKKGILTNKSKLNLHAANGGGYAISIKEVKDKSEAKGLKRL.

An N-terminal signal peptide occupies residues 1-21; the sequence is MKKRKILSLIAFLCISFIANA. A Ca(2+)-binding site is contributed by Glu194. Substrate contacts are provided by residues 215 to 217, 437 to 439, and 507 to 508; these read PNS, HHE, and HE. Residues Glu508, Glu526, and Glu532 each coordinate Ca(2+). Catalysis depends on Glu532, which acts as the Proton donor/acceptor.

Belongs to the glycosyl hydrolase 97 family. In terms of assembly, monomer. It depends on Ca(2+) as a cofactor.

It is found in the periplasm. The catalysed reaction is Hydrolysis of terminal (1-&gt;4)-linked alpha-D-glucose residues successively from non-reducing ends of the chains with release of beta-D-glucose.. It functions in the pathway glycan degradation; starch degradation. Functionally, glucoamylase that hydrolyzes alpha-1,4-glucosidic linkages, alpha-1,6-, alpha-1,3- and alpha-1,2-glucosidic linkages during starch degradation. The polypeptide is Glucan 1,4-alpha-glucosidase SusB (susB) (Bacteroides thetaiotaomicron (strain ATCC 29148 / DSM 2079 / JCM 5827 / CCUG 10774 / NCTC 10582 / VPI-5482 / E50)).